Reading from the N-terminus, the 486-residue chain is NADH-quinone oxidoreductase subunit N (486 aa).

The next 14 helical transmembrane spans lie at 8-28 (LIAL…ILSI), 36-56 (FIAF…YFLI), 74-94 (ILYI…AYPW), 104-124 (EFYL…ISNH), 125-145 (MASL…LIAY), 160-180 (LVLS…IYAI), 204-224 (VLFG…MVPF), 239-259 (VLSF…LYFF), 270-290 (IFLI…LMAI), 298-318 (FFGY…LVSK), 329-349 (GIFL…INLF), 374-394 (ASIV…LGFF), 407-427 (HLWT…YGYL), and 459-479 (ILIF…NPLI).

The protein belongs to the complex I subunit 2 family. In terms of assembly, NDH-1 is composed of 13 different subunits. Subunits NuoA, H, J, K, L, M, N constitute the membrane sector of the complex.

Its subcellular location is the cell membrane. The enzyme catalyses a quinone + NADH + 5 H(+)(in) = a quinol + NAD(+) + 4 H(+)(out). Its function is as follows. NDH-1 shuttles electrons from NADH, via FMN and iron-sulfur (Fe-S) centers, to quinones in the respiratory chain. The immediate electron acceptor for the enzyme in this species is believed to be ubiquinone. Couples the redox reaction to proton translocation (for every two electrons transferred, four hydrogen ions are translocated across the cytoplasmic membrane), and thus conserves the redox energy in a proton gradient. This Buchnera aphidicola subsp. Schizaphis graminum (strain Sg) protein is NADH-quinone oxidoreductase subunit N.